The sequence spans 374 residues: Ribonuclease D (374 aa).

One can recognise a 3'-5' exonuclease domain in the interval 6–171; that stretch reads IISTTEDLKK…RATRVILLSK (166 aa). The HRDC domain occupies 213-292; it reads DRKSIGVAQE…ARALNKKEVD (80 aa).

The protein belongs to the RNase D family. A divalent metal cation serves as cofactor.

It localises to the cytoplasm. It carries out the reaction Exonucleolytic cleavage that removes extra residues from the 3'-terminus of tRNA to produce 5'-mononucleotides.. Its function is as follows. Exonuclease involved in the 3' processing of various precursor tRNAs. Initiates hydrolysis at the 3'-terminus of an RNA molecule and releases 5'-mononucleotides. In Desulfotalea psychrophila (strain LSv54 / DSM 12343), this protein is Ribonuclease D.